A 304-amino-acid chain; its full sequence is Tyrosine recombinase XerC (304 aa).

The 87-residue stretch at 2–88 (ENVKNFVKLF…ALRSFYKFLM (87 aa)) folds into the Core-binding (CB) domain. The 186-residue stretch at 109–294 (RIPKFLYQKE…SKEMLRNTYM (186 aa)) folds into the Tyr recombinase domain. Residues Arg-149, Lys-173, His-246, Arg-249, and His-272 contribute to the active site. Tyr-281 functions as the O-(3'-phospho-DNA)-tyrosine intermediate in the catalytic mechanism.

This sequence belongs to the 'phage' integrase family. XerC subfamily. Forms a cyclic heterotetrameric complex composed of two molecules of XerC and two molecules of XerD.

It localises to the cytoplasm. In terms of biological role, site-specific tyrosine recombinase, which acts by catalyzing the cutting and rejoining of the recombining DNA molecules. The XerC-XerD complex is essential to convert dimers of the bacterial chromosome into monomers to permit their segregation at cell division. It also contributes to the segregational stability of plasmids. This is Tyrosine recombinase XerC from Bacillus subtilis (strain 168).